The sequence spans 362 residues: Chorismate synthase (362 aa).

Residues Arg-48 and Arg-54 each coordinate NADP(+). FMN is bound by residues 125-127 (RSS), 241-242 (NA), Gly-286, 301-305 (KPTSS), and Arg-327.

It belongs to the chorismate synthase family. As to quaternary structure, homotetramer. The cofactor is FMNH2.

The enzyme catalyses 5-O-(1-carboxyvinyl)-3-phosphoshikimate = chorismate + phosphate. The protein operates within metabolic intermediate biosynthesis; chorismate biosynthesis; chorismate from D-erythrose 4-phosphate and phosphoenolpyruvate: step 7/7. Functionally, catalyzes the anti-1,4-elimination of the C-3 phosphate and the C-6 proR hydrogen from 5-enolpyruvylshikimate-3-phosphate (EPSP) to yield chorismate, which is the branch point compound that serves as the starting substrate for the three terminal pathways of aromatic amino acid biosynthesis. This reaction introduces a second double bond into the aromatic ring system. This Paramagnetospirillum magneticum (strain ATCC 700264 / AMB-1) (Magnetospirillum magneticum) protein is Chorismate synthase.